We begin with the raw amino-acid sequence, 113 residues long: Large ribosomal subunit protein uL22 (113 aa).

It belongs to the universal ribosomal protein uL22 family. As to quaternary structure, part of the 50S ribosomal subunit.

This protein binds specifically to 23S rRNA; its binding is stimulated by other ribosomal proteins, e.g. L4, L17, and L20. It is important during the early stages of 50S assembly. It makes multiple contacts with different domains of the 23S rRNA in the assembled 50S subunit and ribosome. Functionally, the globular domain of the protein is located near the polypeptide exit tunnel on the outside of the subunit, while an extended beta-hairpin is found that lines the wall of the exit tunnel in the center of the 70S ribosome. The chain is Large ribosomal subunit protein uL22 from Xanthomonas axonopodis pv. citri (strain 306).